We begin with the raw amino-acid sequence, 479 residues long: Ribulose bisphosphate carboxylase large chain (479 aa).

Positions M1–S2 are excised as a propeptide. Substrate is bound by residues N123 and T173. The active-site Proton acceptor is the K175. Position 177 (K177) interacts with substrate. Residues K201, D203, and E204 each contribute to the Mg(2+) site. An N6-carboxylysine modification is found at K201. S208 is subject to Phosphoserine. Catalysis depends on H294, which acts as the Proton acceptor. 2 residues coordinate substrate: R295 and H327. Residue T330 is modified to Phosphothreonine. A substrate-binding site is contributed by S379.

Belongs to the RuBisCO large chain family. Type I subfamily. Heterohexadecamer of 8 large chains and 8 small chains; disulfide-linked. The disulfide link is formed within the large subunit homodimers. Mg(2+) serves as cofactor. The disulfide bond which can form in the large chain dimeric partners within the hexadecamer appears to be associated with oxidative stress and protein turnover.

It is found in the plastid. The protein resides in the chloroplast. It carries out the reaction 2 (2R)-3-phosphoglycerate + 2 H(+) = D-ribulose 1,5-bisphosphate + CO2 + H2O. It catalyses the reaction D-ribulose 1,5-bisphosphate + O2 = 2-phosphoglycolate + (2R)-3-phosphoglycerate + 2 H(+). RuBisCO catalyzes two reactions: the carboxylation of D-ribulose 1,5-bisphosphate, the primary event in carbon dioxide fixation, as well as the oxidative fragmentation of the pentose substrate in the photorespiration process. Both reactions occur simultaneously and in competition at the same active site. The polypeptide is Ribulose bisphosphate carboxylase large chain (Barbarea verna (Land cress)).